A 59-amino-acid polypeptide reads, in one-letter code: MSYLVTIFSINAIGVVRRYDTTARSRTDAASVLIKYKAPRGYKFDRFELSRERSIFDVL.

In Bacillus phage PZA (Bacteriophage PZA), this protein is Early protein GP1A (1A).